The following is a 252-amino-acid chain: Triosephosphate isomerase (252 aa).

Residue 9-11 (NWK) participates in substrate binding. H96 functions as the Electrophile in the catalytic mechanism. Catalysis depends on E166, which acts as the Proton acceptor. Residues G172, S212, and 233–234 (GG) each bind substrate.

It belongs to the triosephosphate isomerase family. Homodimer.

It is found in the cytoplasm. The enzyme catalyses D-glyceraldehyde 3-phosphate = dihydroxyacetone phosphate. It participates in carbohydrate biosynthesis; gluconeogenesis. The protein operates within carbohydrate degradation; glycolysis; D-glyceraldehyde 3-phosphate from glycerone phosphate: step 1/1. Involved in the gluconeogenesis. Catalyzes stereospecifically the conversion of dihydroxyacetone phosphate (DHAP) to D-glyceraldehyde-3-phosphate (G3P). In Chlorobium chlorochromatii (strain CaD3), this protein is Triosephosphate isomerase.